A 335-amino-acid polypeptide reads, in one-letter code: Histidinol-phosphate aminotransferase (335 aa).

K202 bears the N6-(pyridoxal phosphate)lysine mark.

The protein belongs to the class-II pyridoxal-phosphate-dependent aminotransferase family. Histidinol-phosphate aminotransferase subfamily. Homodimer. The cofactor is pyridoxal 5'-phosphate.

The enzyme catalyses L-histidinol phosphate + 2-oxoglutarate = 3-(imidazol-4-yl)-2-oxopropyl phosphate + L-glutamate. The protein operates within amino-acid biosynthesis; L-histidine biosynthesis; L-histidine from 5-phospho-alpha-D-ribose 1-diphosphate: step 7/9. In Thermotoga sp. (strain RQ2), this protein is Histidinol-phosphate aminotransferase.